The sequence spans 382 residues: Glutamine synthetase cytosolic isozyme (382 aa).

One can recognise a GS beta-grasp domain in the interval 36-118; sequence GKICAEYVWI…VMCDCYEPPK (83 aa). The GS catalytic domain maps to 135–382; sequence TRFACAEVME…RLIVETTILL (248 aa).

This sequence belongs to the glutamine synthetase family. Homooctamer.

It is found in the cytoplasm. It catalyses the reaction L-glutamate + NH4(+) + ATP = L-glutamine + ADP + phosphate + H(+). The chain is Glutamine synthetase cytosolic isozyme (GLN1) from Chlamydomonas reinhardtii (Chlamydomonas smithii).